A 155-amino-acid polypeptide reads, in one-letter code: Small ribosomal subunit protein uS7cz/uS7cy (155 aa).

Belongs to the universal ribosomal protein uS7 family. Part of the 30S ribosomal subunit.

The protein resides in the plastid. It localises to the chloroplast. One of the primary rRNA binding proteins, it binds directly to 16S rRNA where it nucleates assembly of the head domain of the 30S subunit. The polypeptide is Small ribosomal subunit protein uS7cz/uS7cy (rps7-A) (Eucalyptus globulus subsp. globulus (Tasmanian blue gum)).